The following is a 147-amino-acid chain: MKALVILGLLFLSVAVQGKVFERCELARTLKKLGLDDYKGVSLANWLCLSKWESGYNTKATNYNPGSESTDYGIFQINSKWWCNDGKTPNAVDGCHVSCSALMENDIEKAVACAKHIVSEQGITAWVAWKSHCRVHDVSSYVEGCKL.

The first 18 residues, 1-18, serve as a signal peptide directing secretion; sequence MKALVILGLLFLSVAVQG. The 129-residue stretch at 19-147 folds into the C-type lysozyme domain; the sequence is KVFERCELAR…VSSYVEGCKL (129 aa). Cystine bridges form between Cys24–Cys145, Cys48–Cys133, Cys83–Cys99, and Cys95–Cys113. Residues Glu53 and Asp71 contribute to the active site.

This sequence belongs to the glycosyl hydrolase 22 family. As to quaternary structure, monomer. Expressed in stomach.

The protein localises to the secreted. The enzyme catalyses Hydrolysis of (1-&gt;4)-beta-linkages between N-acetylmuramic acid and N-acetyl-D-glucosamine residues in a peptidoglycan and between N-acetyl-D-glucosamine residues in chitodextrins.. Its function is as follows. Lysozymes have primarily a bacteriolytic function; those in tissues and body fluids are associated with the monocyte-macrophage system and enhance the activity of immunoagents. The polypeptide is Lysozyme C-3 (Ovis aries (Sheep)).